The chain runs to 308 residues: Putative S-adenosyl-L-methionine-dependent methyltransferase Mb3816c (308 aa).

S-adenosyl-L-methionine contacts are provided by residues Asp131 and 160–161 (DL).

Belongs to the UPF0677 family.

Its function is as follows. Exhibits S-adenosyl-L-methionine-dependent methyltransferase activity. The sequence is that of Putative S-adenosyl-L-methionine-dependent methyltransferase Mb3816c from Mycobacterium bovis (strain ATCC BAA-935 / AF2122/97).